Consider the following 301-residue polypeptide: Probable alpha-L-glutamate ligase (301 aa).

Positions leucine 104–glutamate 287 constitute an ATP-grasp domain. ATP-binding positions include lysine 141, glutamate 178 to phenylalanine 179, aspartate 187, and arginine 211 to asparagine 213. Residues aspartate 248, glutamate 260, and asparagine 262 each coordinate Mg(2+). Positions 248, 260, and 262 each coordinate Mn(2+).

It belongs to the RimK family. Requires Mg(2+) as cofactor. The cofactor is Mn(2+).

The protein is Probable alpha-L-glutamate ligase of Thioalkalivibrio sulfidiphilus (strain HL-EbGR7).